A 354-amino-acid chain; its full sequence is Probable cinnamyl alcohol dehydrogenase 1 (354 aa).

Residues cysteine 47, histidine 69, glutamate 70, cysteine 100, cysteine 103, cysteine 106, cysteine 114, and cysteine 163 each coordinate Zn(2+). Residues threonine 167, 188–193 (GLGGLG), 211–216 (STSESK), threonine 251, and 297–299 (SVT) each bind NADP(+).

This sequence belongs to the zinc-containing alcohol dehydrogenase family. In terms of assembly, homodimer. It depends on Zn(2+) as a cofactor.

The catalysed reaction is (E)-cinnamyl alcohol + NADP(+) = (E)-cinnamaldehyde + NADPH + H(+). It carries out the reaction (E)-coniferol + NADP(+) = (E)-coniferaldehyde + NADPH + H(+). It catalyses the reaction (E)-sinapyl alcohol + NADP(+) = (E)-sinapaldehyde + NADPH + H(+). The enzyme catalyses (E)-4-coumaroyl alcohol + NADP(+) = (E)-4-coumaraldehyde + NADPH + H(+). The catalysed reaction is (E)-caffeyl alcohol + NADP(+) = (E)-caffeyl aldehyde + NADPH + H(+). Its pathway is aromatic compound metabolism; phenylpropanoid biosynthesis. Involved in lignin biosynthesis. Catalyzes the final step specific for the production of lignin monomers. Catalyzes the NADPH-dependent reduction of coniferaldehyde, 5-hydroxyconiferaldehyde, sinapaldehyde, 4-coumaraldehyde and caffeyl aldehyde to their respective alcohols. The protein is Probable cinnamyl alcohol dehydrogenase 1 of Oryza sativa subsp. japonica (Rice).